A 465-amino-acid chain; its full sequence is tRNA modification GTPase MnmE (465 aa).

R24, E84, and K127 together coordinate (6S)-5-formyl-5,6,7,8-tetrahydrofolate. In terms of domain architecture, TrmE-type G spans 223–383 (GLNIVLAGQP…LRGELLRLIG (161 aa)). N233 lines the K(+) pocket. Residues 233 to 238 (NVGKSS), 252 to 258 (TAIAGTT), and 277 to 280 (DTAG) each bind GTP. S237 serves as a coordination point for Mg(2+). T252, I254, and T257 together coordinate K(+). Residue T258 coordinates Mg(2+). Residue K465 participates in (6S)-5-formyl-5,6,7,8-tetrahydrofolate binding.

It belongs to the TRAFAC class TrmE-Era-EngA-EngB-Septin-like GTPase superfamily. TrmE GTPase family. As to quaternary structure, homodimer. Heterotetramer of two MnmE and two MnmG subunits. Requires K(+) as cofactor.

The protein resides in the cytoplasm. Exhibits a very high intrinsic GTPase hydrolysis rate. Involved in the addition of a carboxymethylaminomethyl (cmnm) group at the wobble position (U34) of certain tRNAs, forming tRNA-cmnm(5)s(2)U34. This chain is tRNA modification GTPase MnmE, found in Janthinobacterium sp. (strain Marseille) (Minibacterium massiliensis).